The primary structure comprises 140 residues: Callisulfakinin (140 aa).

An N-terminal signal peptide occupies residues 1–30 (MYSQQRIFNSKYFIFFIAVLSIFWLPTMSA). Positions 31 to 109 (RNLENSKNEN…LEYEDEDRSK (79 aa)) are excised as a propeptide. The residue at position 114 (tyrosine 114) is a Sulfotyrosine. A Phenylalanine amide modification is found at phenylalanine 119. A Sulfotyrosine modification is found at tyrosine 131. Residue phenylalanine 136 is modified to Phenylalanine amide. A propeptide spanning residues 139–140 (SI) is cleaved from the precursor.

This sequence belongs to the gastrin/cholecystokinin family. In brain, it is specifically expressed in four pairs of neurons. Not expressed in other cells of the brain and in the thoracico-abdominal ganglion.

It localises to the secreted. Functionally, callisulfakinin I is a neuropeptide. The existence of Callisulfakinin II is uncertain. The chain is Callisulfakinin from Calliphora vomitoria (Blue bottle fly).